The primary structure comprises 535 residues: MATCFWLRSCGARRLGSTFPGCRLRPRAGGLVPASGPAPGPAQLRCYAGGLAGLSAALLRTDSFVGGRWLPAAATFPVQDPASGAALGMVADCGVREARAAVRAAYEAFCSWREVSAKERSSLLRKWYNLMIQNKDDLARIITAESGKPLKEAHGEILYSAFFLEWFSEEARRVYGDIIYTPAKDRRALVLKQPIGVAAVITPWNFPSAMITRKVGAALAAGCTVVVKPAEDTPFSALALAELASQAGIPSGVYNVIPCSRKNAKEVGEAICTDPLVSKISFTGSTTTGKILLHHAANSVKRVSMELGGLAPFIVFDSANVDQAVAGALASKFRNTGQTCVCSNRFLVQRGIHDAFVKAFAEAMKKNLHVGNGFEEGTTQGPLINEKAVEKVEKQVNDAVSKGATIVTGGKRHQLGKNFFEPTLLCNVTQDMLCTHEETFGPLAPVIKFDTEEEAIAIANAADVGLAGYFYSQDPAQIWRVAEQLEVGMVGVNEGLISSVECPFGGVKQSGLGREGSKYGIDEYLELKYVCYGGL.

A mitochondrion-targeting transit peptide spans 1–47; the sequence is MATCFWLRSCGARRLGSTFPGCRLRPRAGGLVPASGPAPGPAQLRCY. At Lys-126 the chain carries N6-acetyllysine; alternate. Lys-126 is modified (N6-succinyllysine; alternate). Lys-135 and Lys-184 each carry N6-succinyllysine. Residues Arg-213 and 228 to 231 each bind NAD(+); that span reads KPAE. Position 213 (Arg-213) interacts with substrate. Position 265 is an N6-acetyllysine; alternate (Lys-265). Lys-265 is modified (N6-succinyllysine; alternate). 284–289 contacts NAD(+); the sequence is GSTTTG. Glu-306 (proton acceptor) is an active-site residue. Residue Arg-334 participates in substrate binding. Cys-340 acts as the Nucleophile in catalysis. A disulfide bond links Cys-340 and Cys-342. At Lys-365 the chain carries N6-acetyllysine. Lys-402 is modified (N6-succinyllysine). Position 411 is an N6-acetyllysine (Lys-411). Substrate is bound at residue Ser-498. At Ser-499 the chain carries Phosphoserine.

This sequence belongs to the aldehyde dehydrogenase family. In terms of assembly, homotetramer.

The protein localises to the mitochondrion. The enzyme catalyses succinate semialdehyde + NAD(+) + H2O = succinate + NADH + 2 H(+). Its pathway is amino-acid degradation; 4-aminobutanoate degradation. With respect to regulation, redox-regulated. Inhibited under oxydizing conditions. Functionally, catalyzes one step in the degradation of the inhibitory neurotransmitter gamma-aminobutyric acid (GABA). This Hylobates lar (Lar gibbon) protein is Succinate-semialdehyde dehydrogenase, mitochondrial (ALDH5A1).